Reading from the N-terminus, the 194-residue chain is Mu-like prophage FluMu protein gp37 (194 aa).

This sequence to phage Mu protein gp37.

This is Mu-like prophage FluMu protein gp37 from Haemophilus influenzae (strain ATCC 51907 / DSM 11121 / KW20 / Rd).